Consider the following 343-residue polypeptide: Lactamase-like protein nscB (343 aa).

The Zn(2+) site is built by H118, H120, D122, and H123. D122 serves as the catalytic Proton donor/acceptor.

The protein belongs to the metallo-beta-lactamase superfamily. Zn(2+) serves as cofactor.

The protein operates within secondary metabolite biosynthesis. In terms of biological role, lactamase-like protein; part of the gene cluster that mediates the biosynthesis of neosartoricin B, a prenylated anthracenone that probably exhibits T-cell antiproliferative activity, suggestive of a physiological role as an immunosuppressive agent. The non-reducing polyketide synthase nscA probably synthesizes and cyclizes the decaketide backbone. The hydrolase nscB then mediates the product release through hydrolysis followed by spontaneous decarboxylation. The prenyltransferase nscD catalyzes the addition of the dimethylallyl group to the aromatic C5. The FAD-dependent monooxygenase nscC is then responsible for the stereospecific hydroxylation at C2. Neosartoricin B can be converted into two additional compounds neosartoricins C and D. Neosartoricin C is a spirocyclic compound that is cyclized through the attack of C3 hydroxyl on C14, followed by dehydration. On the other hand, neosartoricin D is a further cyclized compound in which attack of C2 on C14 in neosartoricin C results in the formation of the acetal-containing dioxabicyclo-octanone ring. Both of these compounds are novel and possibly represent related metabolites of the gene cluster. The polypeptide is Lactamase-like protein nscB (Arthroderma otae (strain ATCC MYA-4605 / CBS 113480) (Microsporum canis)).